The chain runs to 654 residues: Fructose-1,6-bisphosphatase class 3 (654 aa).

Residues 288-307 are disordered; that stretch reads NPAFKPKKRPDKHERLTQRE. Positions 298 to 307 are enriched in basic and acidic residues; that stretch reads DKHERLTQRE.

Belongs to the FBPase class 3 family. Requires Mn(2+) as cofactor.

The catalysed reaction is beta-D-fructose 1,6-bisphosphate + H2O = beta-D-fructose 6-phosphate + phosphate. It participates in carbohydrate biosynthesis; gluconeogenesis. The sequence is that of Fructose-1,6-bisphosphatase class 3 from Staphylococcus aureus (strain MRSA252).